The chain runs to 416 residues: Isocitrate dehydrogenase [NADP] (416 aa).

NADP(+) is bound by residues 77–79 and arginine 84; that span reads TIT. Residue threonine 79 participates in substrate binding. Residues 96–102, arginine 111, and arginine 134 contribute to the substrate site; that span reads SPNGTIR. Aspartate 254 lines the Mn(2+) pocket. Lysine 262 contributes to the NADP(+) binding site. Aspartate 277 contributes to the Mn(2+) binding site. Residues 312–317 and asparagine 330 each bind NADP(+); that span reads GTVTRH.

It belongs to the isocitrate and isopropylmalate dehydrogenases family. As to quaternary structure, heterodimer. It depends on Mg(2+) as a cofactor. Mn(2+) serves as cofactor.

Its subcellular location is the cytoplasm. The enzyme catalyses D-threo-isocitrate + NADP(+) = 2-oxoglutarate + CO2 + NADPH. In terms of biological role, may supply 2-oxoglutarate for amino acid biosynthesis and ammonia assimilation via the glutamine synthetase/glutamate synthase (GS/GOGAT) pathway. This chain is Isocitrate dehydrogenase [NADP] (ICDH-1), found in Solanum tuberosum (Potato).